The primary structure comprises 212 residues: Floral homeotic protein PMADS 2 (212 aa).

The MADS-box domain maps to 3–58 (RGKIEIKRIENSSNRQVTYSKRRNGIIKKAKEITVLCDAKVSLIIFGNSGKMHEYC). The region spanning 84–170 (HENLSNEIDR…QYALHQKEMA (87 aa)) is the K-box domain.

As to expression, predominantly expressed in petals and stamens, less in carpels and sepals.

Its subcellular location is the nucleus. In terms of biological role, transcription factor involved in the genetic control of flower development. The polypeptide is Floral homeotic protein PMADS 2 (PMADS2) (Petunia hybrida (Petunia)).